A 253-amino-acid chain; its full sequence is Vitamin B12 import ATP-binding protein BtuD (253 aa).

The ABC transporter domain occupies 4–236; that stretch reads LQLNNVSVGT…DVLSQVFEVD (233 aa). Position 32 to 39 (32 to 39) interacts with ATP; that stretch reads GPNGAGKS.

This sequence belongs to the ABC transporter superfamily. Vitamin B12 importer (TC 3.A.1.13.1) family. In terms of assembly, the complex is composed of two ATP-binding proteins (BtuD), two transmembrane proteins (BtuC) and a solute-binding protein (BtuF).

It localises to the cell inner membrane. It carries out the reaction an R-cob(III)alamin(out) + ATP + H2O = an R-cob(III)alamin(in) + ADP + phosphate + H(+). Functionally, part of the ABC transporter complex BtuCDF involved in vitamin B12 import. Responsible for energy coupling to the transport system. The chain is Vitamin B12 import ATP-binding protein BtuD from Yersinia pestis.